The sequence spans 414 residues: MRRAAAAAVTVTTTTRMAAEGMSTAAAAAEATATAAPAAGSRWGRAWPSALRWIPTSTDRIIAAEKRLLSIVKTGYVQEQVNIGSSPPGSKVRWFRSSSDEPRFINTVTFDSEENAPTLVMVHGYGASQGFFFRNFDALASRFRVIAIDQLGWGGSSRPDFTCKSTEETEAWFIDSFEEWRKAKNLSNFILLGHSFGGYVAAKYALQHPEHVQHLILVGPAGFSSETEHSSEWLTKFRATWKGMLVNHLWESNFTPQRIVRGLGPWGPGLVQRYTSARFGSHSTGELLTEQESTLLTDYIYHTLAAKASGELCLKHIFSFGAFVRKPLLQSASDWKVPTTFIYGQQDWMNYQGAQQARKEMKVPCEIIRVPQGGHFVFIDNPSGFHSAVFHACRKFLSGDGEEGLSLPEGLTSA.

Positions 117–382 (PTLVMVHGYG…GGHFVFIDNP (266 aa)) constitute an AB hydrolase-1 domain. The short motif at 193 to 197 (GHSFG) is the GXSXG element. The short motif at 375–380 (HFVFID) is the HXXXXD motif element.

Belongs to the peptidase S33 family. ABHD4/ABHD5 subfamily.

The protein localises to the cytoplasm. It carries out the reaction a 1-acyl-sn-glycero-3-phosphate + an acyl-CoA = a 1,2-diacyl-sn-glycero-3-phosphate + CoA. Its function is as follows. Lysophosphatidic acid acyltransferase which functions in phosphatidic acid biosynthesis. May regulate neutral lipid accumulation and participate in the regulation of lipid turnover in vegetative cells. May possess additional triacylglycerol lipase and phospholipase A2 activities in vitro. This chain is Probable 1-acylglycerol-3-phosphate O-acyltransferase, found in Oryza sativa subsp. japonica (Rice).